The sequence spans 325 residues: E3 ubiquitin-protein ligase SIAH2 (325 aa).

A compositionally biased stretch (polar residues) spans 1 to 15; sequence MSRPSSTGPSANKPC. The tract at residues 1–43 is disordered; the sequence is MSRPSSTGPSANKPCSKQPPPPQTPHAPSPAAPPAAATISAAG. S6 carries the post-translational modification Phosphoserine. The residue at position 16 (S16) is a Phosphoserine; by DYRK2. Residues 17–33 are compositionally biased toward pro residues; the sequence is KQPPPPQTPHAPSPAAP. T24 bears the Phosphothreonine; by MAPK14 mark. S29 carries the phosphoserine; by DYRK2 and MAPK14 modification. Residues 34 to 43 are compositionally biased toward low complexity; that stretch reads PAAATISAAG. S69 bears the Phosphoserine; by DYRK2 mark. The segment at 81 to 116 adopts an RING-type zinc-finger fold; the sequence is CPVCFDYVLPPILQCQAGHLVCNQCRQKLSCCPTCR. A Phosphothreonine; by DYRK2 modification is found at T120. An SBD region spans residues 131–323; sequence VASAVLFPCK…LGINVTISTC (193 aa). The SIAH-type zinc-finger motif lies at 134–194; that stretch reads AVLFPCKYAT…VMSHLMHAHK (61 aa). Zn(2+) is bound by residues C139, C146, H158, C162, C169, C176, H188, and H193.

It belongs to the SINA (Seven in absentia) family. As to quaternary structure, homodimer. Interacts with VAV1, without mediating its ubiquitin-mediated degradation. Probable component of some large E3 complex possibly composed of UBE2D1, SIAH2, CACYBP/SIP, SKP1, APC and TBL1X. Interacts with UBE2I. Interacts with UBE2E2. Interacts with PEG10, which may inhibit its activity. Interacts with PEG3 and EGLN2. Interacts with DYRK2. Interacts with SNCAIP. Interacts with NR1D1 and NR1D2. Interacts with DCC. Interacts with AXIN1. Post-translationally, phosphorylated at Thr-24 and Ser-29 by MAPK14, which mediates the degradation by the proteasome of EGLN3. Phosphorylated at Ser-29 by DYRK2; this increases the ubiquitin ligase activity and promotes degradation of EGLN3. Detected in brain (at protein level).

It localises to the cytoplasm. It is found in the nucleus. The catalysed reaction is S-ubiquitinyl-[E2 ubiquitin-conjugating enzyme]-L-cysteine + [acceptor protein]-L-lysine = [E2 ubiquitin-conjugating enzyme]-L-cysteine + N(6)-ubiquitinyl-[acceptor protein]-L-lysine.. It participates in protein modification; protein ubiquitination. Its function is as follows. E3 ubiquitin-protein ligase that mediates ubiquitination and subsequent proteasomal degradation of target proteins. E3 ubiquitin ligases accept ubiquitin from an E2 ubiquitin-conjugating enzyme in the form of a thioester and then directly transfers the ubiquitin to targeted substrates. Mediates E3 ubiquitin ligase activity either through direct binding to substrates or by functioning as the essential RING domain subunit of larger E3 complexes. Mediates ubiquitination and proteasomal degradation of DYRK2 in response to hypoxia. Promotes monoubiquitination of SNCA. Triggers the ubiquitin-mediated degradation of many substrates, including proteins involved in transcription regulation (GPS2, POU2AF1, PML, NCOR1), a cell surface receptor (DCC), an antiapoptotic protein (BAG1), and a protein involved in synaptic vesicle function in neurons (SYP). It is thereby involved in apoptosis, tumor suppression, cell cycle, transcription and signaling processes. Has some overlapping function with SIAH1. Triggers the ubiquitin-mediated degradation of TRAF2, whereas SIAH1 does not. Regulates cellular clock function via ubiquitination of circadian transcriptional repressors NR1D1 and NR1D2 leading to their proteasomal degradation. Plays an important role in mediating the rhythmic degradation/clearance of NR1D1 and NR1D2 contributing to their circadian profile of protein abundance. Mediates ubiquitination and degradation of EGLN2 and EGLN3 in response to the unfolded protein response (UPR), leading to their degradation and subsequent stabilization of ATF4. Also part of the Wnt signaling pathway in which it mediates the Wnt-induced ubiquitin-mediated proteasomal degradation of AXIN1. The sequence is that of E3 ubiquitin-protein ligase SIAH2 (Siah2) from Rattus norvegicus (Rat).